The primary structure comprises 323 residues: Lipoyl synthase (323 aa).

Residues cysteine 61, cysteine 66, cysteine 72, cysteine 87, cysteine 91, cysteine 94, and serine 303 each contribute to the [4Fe-4S] cluster site. The 220-residue stretch at 73-292 (WTKKTATFLV…EQYGLSIGIP (220 aa)) folds into the Radical SAM core domain.

This sequence belongs to the radical SAM superfamily. Lipoyl synthase family. [4Fe-4S] cluster serves as cofactor.

The protein resides in the cytoplasm. The enzyme catalyses [[Fe-S] cluster scaffold protein carrying a second [4Fe-4S](2+) cluster] + N(6)-octanoyl-L-lysyl-[protein] + 2 oxidized [2Fe-2S]-[ferredoxin] + 2 S-adenosyl-L-methionine + 4 H(+) = [[Fe-S] cluster scaffold protein] + N(6)-[(R)-dihydrolipoyl]-L-lysyl-[protein] + 4 Fe(3+) + 2 hydrogen sulfide + 2 5'-deoxyadenosine + 2 L-methionine + 2 reduced [2Fe-2S]-[ferredoxin]. Its pathway is protein modification; protein lipoylation via endogenous pathway; protein N(6)-(lipoyl)lysine from octanoyl-[acyl-carrier-protein]: step 2/2. Its function is as follows. Catalyzes the radical-mediated insertion of two sulfur atoms into the C-6 and C-8 positions of the octanoyl moiety bound to the lipoyl domains of lipoate-dependent enzymes, thereby converting the octanoylated domains into lipoylated derivatives. This chain is Lipoyl synthase, found in Protochlamydia amoebophila (strain UWE25).